The following is a 438-amino-acid chain: MYSAVSSRSTVVSSRPLSSSRSLVVSSSYPKMSTASTTYSGVASSGSRISSTRYSTIGSALGGAGGFGTRSSLTLSGNAVISNEKETMQDLNDRLSNYLETVRRLENANQQLEIQIREAMEKRGPSVRDYSNYEKIIKELRDQIYDTTVDNARLVLAIDNARLAADDFRVKWEAELAIRQSVDSDINGLRKVIDDTNLGRLQLESEIEVLKEELVFIKKNHEDEVIALRNQVNSCGVQVDLDAPKGTDLAEIMATLRAEYEAMINKNKDDAEHWYQSKVETFQVETVQNTEALQTAKTELSDLRRRIQSLEIELESNRSMRASLEDTLRDTELRYAMEMERLGALVSRIEAELAQVRTDMQRQAQDYEVLLNAKMKLEAEIATYRHLLGGEDSDTLSLQDALSAMKVSNVQTVQKIVVTTQKLVDGKVVEDSTVTETK.

A head region spans residues alanine 4–asparagine 83. Positions glutamate 84–alanine 119 are coil 1A. One can recognise an IF rod domain in the interval glutamate 84–threonine 395. The tract at residues methionine 120 to isoleucine 136 is linker 1. The tract at residues isoleucine 137–leucine 228 is coil 1B. Residues arginine 229–isoleucine 252 are linker 12. The interval methionine 253–serine 393 is coil 2. A tail region spans residues aspartate 394 to lysine 438.

Belongs to the intermediate filament family. Heterotetramer of two type I and two type II keratins. Keratin-18 associates with keratin-8. Phosphorylated. Post-translationally, proteolytically cleaved by caspases during epithelial cell apoptosis. In terms of tissue distribution, expressed at low levels in skin.

Functionally, when phosphorylated, plays a role in filament reorganization. This chain is Keratin, type I cytoskeletal 18, found in Protopterus aethiopicus (Marbled lungfish).